A 265-amino-acid polypeptide reads, in one-letter code: Type II pantothenate kinase (265 aa).

6–13 (DAGGTLIK) is a binding site for ATP. E70 acts as the Proton acceptor in catalysis. Residues T99, 121–125 (GGMIQ), Y137, and S225 contribute to the ATP site.

Belongs to the type II pantothenate kinase family. Homodimer.

The protein resides in the cytoplasm. It carries out the reaction (R)-pantothenate + ATP = (R)-4'-phosphopantothenate + ADP + H(+). The protein operates within cofactor biosynthesis; coenzyme A biosynthesis; CoA from (R)-pantothenate: step 1/5. Catalyzes the phosphorylation of pantothenate (Pan), the first step in CoA biosynthesis. The sequence is that of Type II pantothenate kinase from Staphylococcus epidermidis (strain ATCC 12228 / FDA PCI 1200).